The primary structure comprises 194 residues: 7-methyl-GTP pyrophosphatase (194 aa).

Residue D70 is the Proton acceptor of the active site.

Belongs to the Maf family. YceF subfamily. A divalent metal cation is required as a cofactor.

It localises to the cytoplasm. The enzyme catalyses N(7)-methyl-GTP + H2O = N(7)-methyl-GMP + diphosphate + H(+). In terms of biological role, nucleoside triphosphate pyrophosphatase that hydrolyzes 7-methyl-GTP (m(7)GTP). May have a dual role in cell division arrest and in preventing the incorporation of modified nucleotides into cellular nucleic acids. The chain is 7-methyl-GTP pyrophosphatase from Vibrio vulnificus (strain CMCP6).